A 424-amino-acid chain; its full sequence is Transcription regulator spe-44 (424 aa).

An SAND domain is found at Pro-65–Asp-150. Disordered regions lie at residues Ala-178–Gln-228 and Glu-371–Phe-394. Residues Tyr-192–Lys-210 show a composition bias toward basic and acidic residues. A compositionally biased stretch (polar residues) spans Pro-378 to Leu-388.

The protein localises to the chromosome. The protein resides in the nucleus. Its function is as follows. Transcription factor which controls spermatogenesis and sperm cell fate by regulation of sperm gene expression. The chain is Transcription regulator spe-44 from Caenorhabditis elegans.